Reading from the N-terminus, the 204-residue chain is Tat proofreading chaperone DmsD (204 aa).

The protein belongs to the TorD/DmsD family. DmsD subfamily.

In terms of biological role, required for biogenesis/assembly of DMSO reductase, but not for the interaction of the DmsA signal peptide with the Tat system. May be part of a chaperone cascade complex that facilitates a folding-maturation pathway for the substrate protein. This chain is Tat proofreading chaperone DmsD, found in Escherichia coli O157:H7.